A 170-amino-acid chain; its full sequence is Crossover junction endodeoxyribonuclease RuvC (170 aa).

Catalysis depends on residues D11, E71, and D143. 3 residues coordinate Mg(2+): D11, E71, and D143.

The protein belongs to the RuvC family. Homodimer which binds Holliday junction (HJ) DNA. The HJ becomes 2-fold symmetrical on binding to RuvC with unstacked arms; it has a different conformation from HJ DNA in complex with RuvA. In the full resolvosome a probable DNA-RuvA(4)-RuvB(12)-RuvC(2) complex forms which resolves the HJ. Mg(2+) is required as a cofactor.

It is found in the cytoplasm. The enzyme catalyses Endonucleolytic cleavage at a junction such as a reciprocal single-stranded crossover between two homologous DNA duplexes (Holliday junction).. The RuvA-RuvB-RuvC complex processes Holliday junction (HJ) DNA during genetic recombination and DNA repair. Endonuclease that resolves HJ intermediates. Cleaves cruciform DNA by making single-stranded nicks across the HJ at symmetrical positions within the homologous arms, yielding a 5'-phosphate and a 3'-hydroxyl group; requires a central core of homology in the junction. The consensus cleavage sequence is 5'-(A/T)TT(C/G)-3'. Cleavage occurs on the 3'-side of the TT dinucleotide at the point of strand exchange. HJ branch migration catalyzed by RuvA-RuvB allows RuvC to scan DNA until it finds its consensus sequence, where it cleaves and resolves the cruciform DNA. This Sinorhizobium fredii (strain NBRC 101917 / NGR234) protein is Crossover junction endodeoxyribonuclease RuvC.